Reading from the N-terminus, the 257-residue chain is Dihydroorotate dehydrogenase B (NAD(+)), electron transfer subunit (257 aa).

The 101-residue stretch at 2-102 (IGRERMTVAS…LGPLGNGFPL (101 aa)) folds into the FAD-binding FR-type domain. Residues 53-56 (RPLS), 70-72 (IYR), and 77-78 (GT) each bind FAD. Residues Cys221, Cys226, Cys229, and Cys244 each contribute to the [2Fe-2S] cluster site.

This sequence belongs to the PyrK family. As to quaternary structure, heterotetramer of 2 PyrK and 2 PyrD type B subunits. Requires [2Fe-2S] cluster as cofactor. It depends on FAD as a cofactor.

The protein operates within pyrimidine metabolism; UMP biosynthesis via de novo pathway; orotate from (S)-dihydroorotate (NAD(+) route): step 1/1. In terms of biological role, responsible for channeling the electrons from the oxidation of dihydroorotate from the FMN redox center in the PyrD type B subunit to the ultimate electron acceptor NAD(+). This Geobacillus kaustophilus (strain HTA426) protein is Dihydroorotate dehydrogenase B (NAD(+)), electron transfer subunit.